Reading from the N-terminus, the 247-residue chain is Carboxy-S-adenosyl-L-methionine synthase (247 aa).

Residues tyrosine 39, 64–66 (GCS), 89–90 (DN), 117–118 (DI), asparagine 132, and arginine 199 contribute to the S-adenosyl-L-methionine site.

The protein belongs to the class I-like SAM-binding methyltransferase superfamily. Cx-SAM synthase family. In terms of assembly, homodimer.

The enzyme catalyses prephenate + S-adenosyl-L-methionine = carboxy-S-adenosyl-L-methionine + 3-phenylpyruvate + H2O. Its function is as follows. Catalyzes the conversion of S-adenosyl-L-methionine (SAM) to carboxy-S-adenosyl-L-methionine (Cx-SAM). The protein is Carboxy-S-adenosyl-L-methionine synthase of Escherichia coli O127:H6 (strain E2348/69 / EPEC).